We begin with the raw amino-acid sequence, 101 residues long: NAD(P)H-quinone oxidoreductase subunit 4L, chloroplastic (101 aa).

Helical transmembrane passes span 2–22, 32–52, and 61–81; these read MLEH…YGLI, MCLE…SDFF, and IFSI…LAIV.

It belongs to the complex I subunit 4L family. NDH is composed of at least 16 different subunits, 5 of which are encoded in the nucleus.

It localises to the plastid. Its subcellular location is the chloroplast thylakoid membrane. The enzyme catalyses a plastoquinone + NADH + (n+1) H(+)(in) = a plastoquinol + NAD(+) + n H(+)(out). It carries out the reaction a plastoquinone + NADPH + (n+1) H(+)(in) = a plastoquinol + NADP(+) + n H(+)(out). Its function is as follows. NDH shuttles electrons from NAD(P)H:plastoquinone, via FMN and iron-sulfur (Fe-S) centers, to quinones in the photosynthetic chain and possibly in a chloroplast respiratory chain. The immediate electron acceptor for the enzyme in this species is believed to be plastoquinone. Couples the redox reaction to proton translocation, and thus conserves the redox energy in a proton gradient. The polypeptide is NAD(P)H-quinone oxidoreductase subunit 4L, chloroplastic (Panax ginseng (Korean ginseng)).